The sequence spans 303 residues: MAAVAKPVQAWADDDDIDDGTTERLPDPQTIVNKDGTKTIISWRFNDQGQKVKTTRRVRLTTHREVVNPRVAERKKWEKFGLSAKDGPGPASDTTSVGENIIFRPSANWRKDQKDESKDANANAMKDKLKDKKVKCRICNGEHFTARCPYKDTMAPIGEAAPAGGVGGGGDDEGGILSAPGAAGGAGAKKGSYVPPALRGDRKEGEKMGGGAGGKYGERDDLATLRVTNVSEMAEEQELRDMFERFGRVTRVFLAKDRDTGLAKGFAFISFADREDAVKACNKMDGWGFKHLILRVEFAKKAT.

Disordered stretches follow at residues 1 to 32, 81 to 100, 105 to 126, and 181 to 215; these read MAAVAKPVQAWADDDDIDDGTTERLPDPQTIV, GLSAKDGPGPASDTTSVGEN, PSANWRKDQKDESKDANANAMK, and GAAGGAGAKKGSYVPPALRGDRKEGEKMGGGAGGK. The span at 109 to 126 shows a compositional bias: basic and acidic residues; it reads WRKDQKDESKDANANAMK. In terms of domain architecture, RRM spans 223-301; it reads ATLRVTNVSE…LILRVEFAKK (79 aa).

Belongs to the eIF-3 subunit G family. In terms of assembly, component of the eukaryotic translation initiation factor 3 (eIF-3) complex.

It localises to the cytoplasm. RNA-binding component of the eukaryotic translation initiation factor 3 (eIF-3) complex, which is involved in protein synthesis of a specialized repertoire of mRNAs and, together with other initiation factors, stimulates binding of mRNA and methionyl-tRNAi to the 40S ribosome. The eIF-3 complex specifically targets and initiates translation of a subset of mRNAs involved in cell proliferation. This subunit can bind 18S rRNA. The chain is Eukaryotic translation initiation factor 3 subunit G from Pyricularia oryzae (strain 70-15 / ATCC MYA-4617 / FGSC 8958) (Rice blast fungus).